We begin with the raw amino-acid sequence, 355 residues long: Apyrase apy-1 (355 aa).

At 1-6 the chain is on the cytoplasmic side; the sequence is MTQESN. A helical; Signal-anchor for type II membrane protein membrane pass occupies residues 7 to 29; sequence SNFFNFLLFGFVTAIAFYSGTQF. N30 carries an N-linked (GlcNAc...) asparagine glycan. Residues 30–355 are Lumenal-facing; sequence NKSSEQEEHI…PYKYEGIAFA (326 aa). Positions 119, 166, and 235 each coordinate Ca(2+). N291 is a glycosylation site (N-linked (GlcNAc...) asparagine). E350 contacts Ca(2+).

It belongs to the apyrase family. Ca(2+) is required as a cofactor.

The protein localises to the endomembrane system. It catalyses the reaction a ribonucleoside 5'-diphosphate + H2O = a ribonucleoside 5'-phosphate + phosphate + H(+). In terms of biological role, hydrolyzes UDP and to a lesser extent GDP. By preventing the accumulation of NDP, may promote the reglucosylation of incompletely folded glycoproteins in the endoplasmic reticulum following the unfolded protein response. The sequence is that of Apyrase apy-1 from Caenorhabditis elegans.